A 172-amino-acid polypeptide reads, in one-letter code: Adenine phosphoribosyltransferase (172 aa).

The protein belongs to the purine/pyrimidine phosphoribosyltransferase family. As to quaternary structure, homodimer.

It localises to the cytoplasm. It catalyses the reaction AMP + diphosphate = 5-phospho-alpha-D-ribose 1-diphosphate + adenine. Its pathway is purine metabolism; AMP biosynthesis via salvage pathway; AMP from adenine: step 1/1. Catalyzes a salvage reaction resulting in the formation of AMP, that is energically less costly than de novo synthesis. The protein is Adenine phosphoribosyltransferase of Streptococcus uberis (strain ATCC BAA-854 / 0140J).